A 385-amino-acid polypeptide reads, in one-letter code: Iron uptake system component EfeM (385 aa).

A signal peptide spans 1 to 22 (MNFTKIAVSAGCILALCAGCGA).

The protein belongs to the EfeM/EfeO family. Component of the iron transporter efeUOB/M complex composed of EfeU, EfeM and EfeB; EfeU is essential for the complex formation.

It is found in the cell membrane. It localises to the membrane raft. In terms of biological role, part of the iron transporter system efeUOB/M involved in iron import. Specifically binds Fe(3+), which is produced by EfeB-mediated oxidation of Fe(2+), and delivers it to the cell membrane permease EfeU. This chain is Iron uptake system component EfeM, found in Bacillus subtilis (strain 168).